The primary structure comprises 599 residues: RING finger protein unkempt (599 aa).

5 C3H1-type zinc fingers span residues 71–100 (YSAD…HRTA), 111–141 (YYKT…HGMQ), 194–220 (NYKT…HNSK), 230–264 (KYRS…HTRT), and 272–300 (IYKS…HVEP). Residue Ser411 is modified to Phosphoserine. The RING-type zinc finger occupies 556-591 (CMKCEENNRTVTLEPCNHLSICNTCAESVTECPYCQ).

It belongs to the unkempt family. Ubiquitous in most somatic tissues from syncytial embryo through to embryo stage 15. Expression becomes restricted predominantly to the CNS at stages 16 and 17.

It is found in the cytoplasm. In terms of biological role, essential for late larval/early pupal development. In Drosophila melanogaster (Fruit fly), this protein is RING finger protein unkempt (unk).